The following is a 353-amino-acid chain: Phosphate acyltransferase (353 aa).

The protein belongs to the PlsX family. As to quaternary structure, homodimer. Probably interacts with PlsY.

It is found in the cytoplasm. The enzyme catalyses a fatty acyl-[ACP] + phosphate = an acyl phosphate + holo-[ACP]. It functions in the pathway lipid metabolism; phospholipid metabolism. Catalyzes the reversible formation of acyl-phosphate (acyl-PO(4)) from acyl-[acyl-carrier-protein] (acyl-ACP). This enzyme utilizes acyl-ACP as fatty acyl donor, but not acyl-CoA. In Rhodopseudomonas palustris (strain BisB18), this protein is Phosphate acyltransferase.